Here is a 338-residue protein sequence, read N- to C-terminus: Lipoate-protein ligase A (338 aa).

The BPL/LPL catalytic domain occupies 29-216 (PATQRVLFLW…AFFAHYGERV (188 aa)). Residues arginine 71, 76 to 79 (GAVF), and lysine 134 each bind ATP. Residue lysine 134 coordinates (R)-lipoate.

It belongs to the LplA family. Monomer.

The protein resides in the cytoplasm. The enzyme catalyses L-lysyl-[lipoyl-carrier protein] + (R)-lipoate + ATP = N(6)-[(R)-lipoyl]-L-lysyl-[lipoyl-carrier protein] + AMP + diphosphate + H(+). Its pathway is protein modification; protein lipoylation via exogenous pathway; protein N(6)-(lipoyl)lysine from lipoate: step 1/2. The protein operates within protein modification; protein lipoylation via exogenous pathway; protein N(6)-(lipoyl)lysine from lipoate: step 2/2. Its function is as follows. Catalyzes both the ATP-dependent activation of exogenously supplied lipoate to lipoyl-AMP and the transfer of the activated lipoyl onto the lipoyl domains of lipoate-dependent enzymes. The protein is Lipoate-protein ligase A of Salmonella schwarzengrund (strain CVM19633).